The primary structure comprises 356 residues: Tyrosine recombinase XerS (356 aa).

The 106-residue stretch at 16–121 folds into the Core-binding (CB) domain; that stretch reads IMPWYVLEYY…ALSSLFKYLT (106 aa). The region spanning 169-354 is the Tyr recombinase domain; it reads EFLEYIDCEY…VNDEQKNALD (186 aa). Residues arginine 210, lysine 234, histidine 306, arginine 309, and histidine 332 contribute to the active site. The active-site O-(3'-phospho-DNA)-tyrosine intermediate is the tyrosine 341.

The protein belongs to the 'phage' integrase family. XerS subfamily.

It is found in the cytoplasm. FtsK is required for recombination. Its function is as follows. Site-specific tyrosine recombinase, which acts by catalyzing the cutting and rejoining of the recombining DNA molecules. Essential to convert dimers of the bacterial chromosome into monomers to permit their segregation at cell division. This chain is Tyrosine recombinase XerS, found in Streptococcus agalactiae serotype Ia (strain ATCC 27591 / A909 / CDC SS700).